The sequence spans 737 residues: Polyribonucleotide nucleotidyltransferase (737 aa).

Mg(2+)-binding residues include Asp-489 and Asp-495. The region spanning 556-615 (PKIDTIKIDVDKIKIVIGKGGETIDKIIAETGVKIDIDEEGNVSIYSSDQDAINRAKEII) is the KH domain. The 69-residue stretch at 625–693 (DEVYRAKVVR…EKGRIDASMK (69 aa)) folds into the S1 motif domain. The disordered stretch occupies residues 691 to 737 (SMKALLPRPPKPEHDEKGEKSERPHRPRHQKDYKPKKEFTETPKDSE). A compositionally biased stretch (basic and acidic residues) spans 700–737 (PKPEHDEKGEKSERPHRPRHQKDYKPKKEFTETPKDSE).

Belongs to the polyribonucleotide nucleotidyltransferase family. Requires Mg(2+) as cofactor.

Its subcellular location is the cytoplasm. The catalysed reaction is RNA(n+1) + phosphate = RNA(n) + a ribonucleoside 5'-diphosphate. Functionally, involved in mRNA degradation. Catalyzes the phosphorolysis of single-stranded polyribonucleotides processively in the 3'- to 5'-direction. This chain is Polyribonucleotide nucleotidyltransferase, found in Streptococcus pneumoniae serotype 2 (strain D39 / NCTC 7466).